We begin with the raw amino-acid sequence, 358 residues long: UDP-N-acetylglucosamine--N-acetylmuramyl-(pentapeptide) pyrophosphoryl-undecaprenol N-acetylglucosamine transferase (358 aa).

Residues 13–15 (TGG), Asn-125, Arg-161, Ser-189, Ile-244, and Gln-288 contribute to the UDP-N-acetyl-alpha-D-glucosamine site.

Belongs to the glycosyltransferase 28 family. MurG subfamily.

The protein resides in the cell membrane. The catalysed reaction is di-trans,octa-cis-undecaprenyl diphospho-N-acetyl-alpha-D-muramoyl-L-alanyl-D-glutamyl-meso-2,6-diaminopimeloyl-D-alanyl-D-alanine + UDP-N-acetyl-alpha-D-glucosamine = di-trans,octa-cis-undecaprenyl diphospho-[N-acetyl-alpha-D-glucosaminyl-(1-&gt;4)]-N-acetyl-alpha-D-muramoyl-L-alanyl-D-glutamyl-meso-2,6-diaminopimeloyl-D-alanyl-D-alanine + UDP + H(+). Its pathway is cell wall biogenesis; peptidoglycan biosynthesis. Functionally, cell wall formation. Catalyzes the transfer of a GlcNAc subunit on undecaprenyl-pyrophosphoryl-MurNAc-pentapeptide (lipid intermediate I) to form undecaprenyl-pyrophosphoryl-MurNAc-(pentapeptide)GlcNAc (lipid intermediate II). This chain is UDP-N-acetylglucosamine--N-acetylmuramyl-(pentapeptide) pyrophosphoryl-undecaprenol N-acetylglucosamine transferase, found in Baumannia cicadellinicola subsp. Homalodisca coagulata.